A 64-amino-acid chain; its full sequence is Neurotoxin BmK-II (64 aa).

The LCN-type CS-alpha/beta domain maps to 2 to 64 (RDAYIAKPHN…VPIRIPGNCH (63 aa)). 4 disulfide bridges follow: C12-C63, C16-C36, C22-C46, and C26-C48.

The protein belongs to the long (4 C-C) scorpion toxin superfamily. Sodium channel inhibitor family. Alpha subfamily. As to expression, expressed by the venom gland.

It localises to the secreted. In terms of biological role, binds to sodium channels (Nav) and inhibits the inactivation of the activated channels, thereby blocking neuronal transmission. This toxin is active against mammals and insects. BmK-II is 6-fold less toxic than BmK-I. In Olivierus martensii (Manchurian scorpion), this protein is Neurotoxin BmK-II.